The sequence spans 237 residues: 2,3-bisphosphoglycerate-dependent phosphoglycerate mutase (237 aa).

Residues 8-15, 21-22, Arg-60, 87-90, Lys-98, 114-115, and 180-181 each bind substrate; these read RHGQSAWN, TG, ERHY, RR, and GN. Catalysis depends on His-9, which acts as the Tele-phosphohistidine intermediate. Residue Glu-87 is the Proton donor/acceptor of the active site.

Belongs to the phosphoglycerate mutase family. BPG-dependent PGAM subfamily. As to quaternary structure, homodimer.

The catalysed reaction is (2R)-2-phosphoglycerate = (2R)-3-phosphoglycerate. It participates in carbohydrate degradation; glycolysis; pyruvate from D-glyceraldehyde 3-phosphate: step 3/5. Its function is as follows. Catalyzes the interconversion of 2-phosphoglycerate and 3-phosphoglycerate. This Hyphomonas neptunium (strain ATCC 15444) protein is 2,3-bisphosphoglycerate-dependent phosphoglycerate mutase.